The chain runs to 378 residues: MLLKNASFYDDEVLKRADIRLKDSLIIEIEENLSPTNNEEVVECEDLFVLPSFIDLSVTNLEGYENLKQKAFKGGVGLLNVFNGDQSGIKNIMAIKNNQLADIATLKNKGGEILIAPSDAFLELISHYAKSYNLPLLISLENSFEALNSGALAYELGQNFVDNAFENTRLVRFMEVSRALQIPVLLDKVNSIATLKLIKAFNDLGAKLQAQTPLSHLILDESVYEDYEPRFKIAPPLRDKEGQNALKEALKNNEIAMLTSLHASKNSNAQLFEESAFGCESIEDAFSVAYTFLVQKKVISFQQLIKVMTINQAKFLKLNAGEVKENQLANLMIVDLNAQTRVSNQNSPFYGLELYGEVQRMILKGQTTFIKENACKKS.

The protein belongs to the metallo-dependent hydrolases superfamily. DHOase family. PyrC' subfamily.

Its function is as follows. Non-functional DHOase. This is Probable dihydroorotase-like protein (pyrC') from Helicobacter pylori (strain J99 / ATCC 700824) (Campylobacter pylori J99).